The following is a 546-amino-acid chain: Oncoprotein-induced transcript 3 protein (546 aa).

Residues 1 to 16 (MPLSLLLACLFTTVTL) form the signal peptide. Residues Asn-89 and Asn-116 are each glycosylated (N-linked (GlcNAc...) asparagine). In terms of domain architecture, EGF-like; calcium-binding spans 182 to 222 (DENECEHNNGGCSEICVNLKNSHRCACGVGRVLRSDGKTCE). 3 disulfides stabilise this stretch: Cys-186-Cys-197, Cys-193-Cys-206, and Cys-208-Cys-221. The 256-residue stretch at 261–516 (TCQVPVLCKS…SRCAQGCHRR (256 aa)) folds into the ZP domain. Asn-299 is a glycosylation site (N-linked (GlcNAc...) asparagine). Residues 524-546 (DEDSAGLQSQTLTGGPISIDWEE) form a disordered region.

The protein resides in the nucleus envelope. In terms of biological role, may be involved in hepatocellular function and development. This chain is Oncoprotein-induced transcript 3 protein (Oit3), found in Rattus norvegicus (Rat).